A 572-amino-acid polypeptide reads, in one-letter code: 2-hydroxyacyl-CoA lyase (572 aa).

Residue alanine 2 is modified to N-acetylalanine. Glutamate 58 lines the thiamine diphosphate pocket. Residues 407–488 (TMDVGRSVLV…IIVFNNGGVY (82 aa)) are thiamine pyrophosphate binding. Residues aspartate 457 and asparagine 484 each contribute to the Mg(2+) site.

The protein belongs to the TPP enzyme family. Homotetramer. It depends on Mg(2+) as a cofactor. Thiamine diphosphate is required as a cofactor.

It catalyses the reaction an (R)-2-hydroxy-long-chain-fatty acyl-CoA = a long-chain fatty aldehyde + formyl-CoA. The catalysed reaction is a 2-hydroxy-3-methyl fatty acyl-CoA = a 2-methyl-branched fatty aldehyde + formyl-CoA. Functionally, catalyzes a carbon-carbon cleavage reaction; cleaves a 2-hydroxy-3-methylacyl-CoA into formyl-CoA and a 2-methyl-branched fatty aldehyde. In Arabidopsis thaliana (Mouse-ear cress), this protein is 2-hydroxyacyl-CoA lyase (HACL).